A 396-amino-acid chain; its full sequence is Anhydro-N-acetylmuramic acid kinase (396 aa).

21–28 (GTSADGID) is an ATP binding site.

It belongs to the anhydro-N-acetylmuramic acid kinase family.

It carries out the reaction 1,6-anhydro-N-acetyl-beta-muramate + ATP + H2O = N-acetyl-D-muramate 6-phosphate + ADP + H(+). It functions in the pathway amino-sugar metabolism; 1,6-anhydro-N-acetylmuramate degradation. The protein operates within cell wall biogenesis; peptidoglycan recycling. Functionally, catalyzes the specific phosphorylation of 1,6-anhydro-N-acetylmuramic acid (anhMurNAc) with the simultaneous cleavage of the 1,6-anhydro ring, generating MurNAc-6-P. Is required for the utilization of anhMurNAc either imported from the medium or derived from its own cell wall murein, and thus plays a role in cell wall recycling. This Caldanaerobacter subterraneus subsp. tengcongensis (strain DSM 15242 / JCM 11007 / NBRC 100824 / MB4) (Thermoanaerobacter tengcongensis) protein is Anhydro-N-acetylmuramic acid kinase.